Consider the following 94-residue polypeptide: Cell division protein FtsB (94 aa).

The Cytoplasmic segment spans residues 1 to 3 (MRA). A helical transmembrane segment spans residues 4-21 (FAVLLIIALGWLQYTLWF). Residues 22 to 94 (GKNGMEDYAQ…YRIIDENSEE (73 aa)) lie on the Periplasmic side of the membrane. A coiled-coil region spans residues 40-60 (EEVNQGLRNRNGQMFAEIDDL).

The protein belongs to the FtsB family. As to quaternary structure, part of a complex composed of FtsB, FtsL and FtsQ.

It is found in the cell inner membrane. Its function is as follows. Essential cell division protein. May link together the upstream cell division proteins, which are predominantly cytoplasmic, with the downstream cell division proteins, which are predominantly periplasmic. This Aliivibrio salmonicida (strain LFI1238) (Vibrio salmonicida (strain LFI1238)) protein is Cell division protein FtsB.